A 1640-amino-acid polypeptide reads, in one-letter code: MAQILPVRFQEHFQLQNLGINPANIGFSTLTMESDKFICIREKVGEQAQVTIIDMSDPMAPIRRPISAESAIMNPASKVIALKAGKTLQIFNIEMKSKMKAHTMAEEVIFWKWVSVNTVALVTETAVYHWSMEGDSQPMKMFDRHTSLVGCQVIHYRTDEYQKWLLLVGISAQQNRVVGAMQLYSVDRKVSQPIEGHAAAFAEFKMEGNAKPATLFCFAVRNPTGGKLHIIEVGQPAAGNQPFVKKAVDVFFPPEAQNDFPVAMQIGAKHGVIYLITKYGYLHLYDLESGVCICMNRISADTIFVTAPHKPTSGIIGVNKKGQVLSVCVEEDNIVNYATNVLQNPDLGLRLAVRSNLAGAEKLFVRKFNTLFAQGSYAEAAKVAASAPKGILRTRETVQKFQSIPAQSGQASPLLQYFGILLDQGQLNKLESLELCHLVLQQGRKQLLEKWLKEDKLECSEELGDLVKTTDPMLALSVYLRANVPSKVIQCFAETGQFQKIVLYAKKVGYTPDWIFLLRGVMKISPEQGLQFSRMLVQDEEPLANISQIVDIFMENSLIQQCTSFLLDALKNNRPAEGLLQTWLLEMNLVHAPQVADAILGNKMFTHYDRAHIAQLCEKAGLLQQALEHYTDLYDIKRAVVHTHLLNPEWLVNFFGSLSVEDSVECLHAMLSANIRQNLQLCVQVASKYHEQLGTQALVELFESFKSYKGLFYFLGSIVNFSQDPDVHLKYIQAACKTGQIKEVERICRESSCYNPERVKNFLKEAKLTDQLPLIIVCDRFGFVHDLVLYLYRNNLQRYIEIYVQKVNPSRTPAVIGGLLDVDCSEEVIKHLIMAVRGQFSTDELVAEVEKRNRLKLLLPWLESQIQEGCEEPATHNALAKIYIDSNNSPECFLRENAYYDSSVVGRYCEKRDPHLACVAYERGQCDLELIKVCNENSLFKSEARYLVCRKDPELWAHVLEETNPSRRQLIDQVVQTALSETRDPEEISVTVKAFMTADLPNELIELLEKIVLDNSVFSEHRNLQNLLILTAIKADRTRVMEYISRLDNYDALDIASIAVSSALYEEAFTVFHKFDMNASAIQVLIEHIGNLDRAYEFAERCNEPAVWSQLAQAQLQKDLVKEAINSYIRGDDPSSYLEVVQSASRSNNWEDLVKFLQMARKKGRESYIETELIFALAKTSRVSELEDFINGPNNAHIQQVGDRCYEEGMYEAAKLLYSNVSNFARLASTLVHLGEYQAAVDNSRKASSTRTWKEVCFACMDGQEFRFAQLCGLHIVIHADELEELMCYYQDRGYFEELILLLEAALGLERAHMGMFTELAILYSKFKPQKMLEHLELFWSRVNIPKVLRAAEQAHLWAELVFLYDKYEEYDNAVLTMMSHPTEAWKEGQFKDIITKVANVELCYRALQFYLDYKPLLINDLLLVLSPRLDHTWTVSFFSKAGQLPLVKPYLRSVQSHNNKSVNEALNHLLTEEEDYQGLRASIDAYDNFDNISLAQQLEKHQLMEFRCIAAYLYKGNNWWAQSVELCKKDHLYKDAMQHAAESRDAELAQKLLQWFLEEGKRECFAACLFTCYDLLRPDMVLELAWRHNLVDLAMPYFIQVMREYLSKVDKLDALESLRKQEEHVTEPAPLVFDFDGHE.

A2 is subject to N-acetylalanine. Residues 2–479 are globular terminal domain; sequence AQILPVRFQE…TDPMLALSVY (478 aa). 7 WD40-like repeat regions span residues 24–67, 68–107, 108–149, 150–195, 196–257, 258–301, and 302–330; these read NIGF…RPIS, AESAIMNPASKVIALKAGKTLQIFNIEMKSKMKAHTMAEE, VIFW…TSLV, GCQV…QPIE, GHAA…PEAQ, NDFP…ISAD, and TIFVTAPHKPTSGIIGVNKKGQVLSVCVE. Position 67 is a phosphoserine (S67). Y184 carries the post-translational modification Phosphotyrosine. Phosphothreonine is present on T394. Residues 449 to 465 are binding site for the uncoating ATPase, involved in lattice disassembly; that stretch reads EKWLKEDKLECSEELGD. A flexible linker region spans residues 480–523; it reads LRANVPSKVIQCFAETGQFQKIVLYAKKVGYTPDWIFLLRGVMK. The segment at 524–634 is distal segment; that stretch reads ISPEQGLQFS…QALEHYTDLY (111 aa). Residues 524-1640 form a heavy chain arm region; it reads ISPEQGLQFS…PLVFDFDGHE (1117 aa). 7 CHCR repeats span residues 537–683, 686–828, 833–972, 979–1124, 1128–1269, 1274–1420, and 1423–1566; these read VQDE…QLCV, ASKY…SEEV, IMAV…QLID, LSET…VKEA, YIRG…FRFA, LHIV…LLIN, and LLVL…RECF. Y634 carries the post-translational modification Phosphotyrosine. Residues 639-1640 are proximal segment; sequence AVVHTHLLNP…PLVFDFDGHE (1002 aa). An N6-succinyllysine modification is found at K737. K856 carries the post-translational modification N6-acetyllysine. Phosphotyrosine is present on Y899. A Phosphoserine modification is found at S1167. Phosphotyrosine is present on Y1206. The tract at residues 1213–1522 is involved in binding clathrin light chain; it reads AAKLLYSNVS…YLYKGNNWWA (310 aa). S1229 is subject to Phosphoserine. Residue K1441 is modified to N6-acetyllysine; alternate. K1441 is subject to N6-succinyllysine; alternate. Y1477 and Y1487 each carry phosphotyrosine. S1494 is modified (phosphoserine). Residue K1501 is modified to N6-acetyllysine. Residues 1551–1640 are trimerization; it reads QKLLQWFLEE…PLVFDFDGHE (90 aa).

It belongs to the clathrin heavy chain family. As to quaternary structure, clathrin triskelions, composed of 3 heavy chains and 3 light chains, are the basic subunits of the clathrin coat. In the presence of light chains, hub assembly is influenced by both the pH and the concentration of calcium. May interact with OCRL. Interacts with AFTPH/aftiphilin. As to expression, maximal levels in skeletal muscle. High levels in heart and testis. Low expression detected in all other tissues.

It localises to the cytoplasmic vesicle membrane. Its subcellular location is the membrane. The protein resides in the coated pit. Its function is as follows. Clathrin is the major protein of the polyhedral coat of coated pits and vesicles. Two different adapter protein complexes link the clathrin lattice either to the plasma membrane or to the trans-Golgi network. The protein is Clathrin heavy chain 2 (CLTCL1) of Homo sapiens (Human).